A 591-amino-acid polypeptide reads, in one-letter code: Aspartate--tRNA(Asp/Asn) ligase (591 aa).

Residue E174 participates in L-aspartate binding. An aspartate region spans residues 198-201 (QLFK). L-aspartate is bound at residue R220. ATP-binding positions include 220 to 222 (RDE) and Q229. H450 contacts L-aspartate. E483 contributes to the ATP binding site. L-aspartate is bound at residue R490. Residue 535-538 (GLDR) coordinates ATP.

It belongs to the class-II aminoacyl-tRNA synthetase family. Type 1 subfamily. In terms of assembly, homodimer.

The protein localises to the cytoplasm. It catalyses the reaction tRNA(Asx) + L-aspartate + ATP = L-aspartyl-tRNA(Asx) + AMP + diphosphate. Its function is as follows. Aspartyl-tRNA synthetase with relaxed tRNA specificity since it is able to aspartylate not only its cognate tRNA(Asp) but also tRNA(Asn). Reaction proceeds in two steps: L-aspartate is first activated by ATP to form Asp-AMP and then transferred to the acceptor end of tRNA(Asp/Asn). This is Aspartate--tRNA(Asp/Asn) ligase from Pseudomonas putida (strain ATCC 700007 / DSM 6899 / JCM 31910 / BCRC 17059 / LMG 24140 / F1).